The following is a 160-amino-acid chain: uncharacterized protein (160 aa).

The N-acetyltransferase domain occupies 7–151; that stretch reads LLINYKTLEE…NPLIWHPDMD (145 aa).

This is an uncharacterized protein from Bacillus subtilis (strain 168).